A 174-amino-acid chain; its full sequence is RNA pyrophosphohydrolase (174 aa).

The 144-residue stretch at 6–149 (GFRANVGIII…KRDVYRKVMK (144 aa)) folds into the Nudix hydrolase domain. Residues 38-59 (GGVDEGESAEQAMYRELYEEVG) carry the Nudix box motif.

This sequence belongs to the Nudix hydrolase family. RppH subfamily. A divalent metal cation serves as cofactor.

Functionally, accelerates the degradation of transcripts by removing pyrophosphate from the 5'-end of triphosphorylated RNA, leading to a more labile monophosphorylated state that can stimulate subsequent ribonuclease cleavage. This is RNA pyrophosphohydrolase from Shewanella loihica (strain ATCC BAA-1088 / PV-4).